The chain runs to 346 residues: Phosphate acyltransferase (346 aa).

This sequence belongs to the PlsX family. Homodimer. Probably interacts with PlsY.

Its subcellular location is the cytoplasm. It carries out the reaction a fatty acyl-[ACP] + phosphate = an acyl phosphate + holo-[ACP]. The protein operates within lipid metabolism; phospholipid metabolism. Catalyzes the reversible formation of acyl-phosphate (acyl-PO(4)) from acyl-[acyl-carrier-protein] (acyl-ACP). This enzyme utilizes acyl-ACP as fatty acyl donor, but not acyl-CoA. The polypeptide is Phosphate acyltransferase (Crocosphaera subtropica (strain ATCC 51142 / BH68) (Cyanothece sp. (strain ATCC 51142))).